Consider the following 650-residue polypeptide: Glycoprotein 105 (650 aa).

Residues 1-32 form a helical; Signal-anchor for type II membrane protein membrane-spanning segment; it reads MATARLGVMRPPRSCALIFLCAFSMATAPTNA. Residues 33 to 650 lie on the Virion surface side of the membrane; sequence TAHRRAGTVK…RFPHVGIGSY (618 aa). Residues asparagine 52, asparagine 290, asparagine 332, asparagine 338, asparagine 359, asparagine 422, asparagine 516, and asparagine 552 are each glycosylated (N-linked (GlcNAc...) asparagine; by host).

Associates with the gp82-gp105 complex. N-Glycosylated.

The protein resides in the virion membrane. The sequence is that of Glycoprotein 105 (U96/U97/U98/U99/U100) from Homo sapiens (Human).